We begin with the raw amino-acid sequence, 443 residues long: Dihydroorotate dehydrogenase (quinone), mitochondrial (443 aa).

The N-terminal 21 residues, 1–21, are a transit peptide targeting the mitochondrion; it reads MYQRSLFRGVAQGLKRSSVRF. A helical transmembrane segment spans residues 38–54; it reads WKLLSVIGSFTAGVAIY. Residues 122–126 and serine 146 each bind FMN; that span reads AGFDK. Lysine 126 is a substrate binding site. Serine 168 is modified (phosphoserine). 171 to 175 serves as a coordination point for substrate; it reads NRYGF. FMN is bound by residues asparagine 234 and asparagine 264. Residue 264 to 269 participates in substrate binding; sequence NVSSPN. Serine 267 acts as the Nucleophile in catalysis. Lysine 306 provides a ligand contact to FMN. Position 335 to 336 (335 to 336) interacts with substrate; sequence NT. Residues glycine 358, glycine 387, and 408-409 each bind FMN; that span reads YT.

This sequence belongs to the dihydroorotate dehydrogenase family. Type 2 subfamily. FMN serves as cofactor.

It is found in the mitochondrion inner membrane. It catalyses the reaction (S)-dihydroorotate + a quinone = orotate + a quinol. Its pathway is pyrimidine metabolism; UMP biosynthesis via de novo pathway; orotate from (S)-dihydroorotate (quinone route): step 1/1. Its function is as follows. In the de novo pyrimidine biosynthesis pathway, catalyzes the stereospecific oxidation of (S)-dihydroorotate to orotate with reduction of flavin and the transfer of electrons to ubiquinone, which is part of the respiratory chain. Does not use fumarate and NAD as electron acceptors. The sequence is that of Dihydroorotate dehydrogenase (quinone), mitochondrial (ura3) from Schizosaccharomyces pombe (strain 972 / ATCC 24843) (Fission yeast).